The primary structure comprises 547 residues: Cytochrome P450 monooxygenase oblB (547 aa).

2 helical membrane-spanning segments follow: residues 42–62 (GAVG…RLFL) and 242–262 (FDMF…PWLI). N277 carries an N-linked (GlcNAc...) asparagine glycan. Residues 345–365 (VLIGSGTMTTAGTMGFLCYYI) traverse the membrane as a helical segment. Position 489 (C489) interacts with heme.

Belongs to the cytochrome P450 family. Heme serves as cofactor.

It is found in the membrane. The enzyme catalyses ophiobolin F + 4 reduced [NADPH--hemoprotein reductase] + 4 O2 = ophiobolin C + 4 oxidized [NADPH--hemoprotein reductase] + 6 H2O + 4 H(+). It participates in secondary metabolite biosynthesis; terpenoid biosynthesis. Its function is as follows. Cytochrome P450 monooxygenase; part of the gene cluster that mediates the biosynthesis of the sesterterpenes ophiobolins, fungal phytotoxins with potential anti-cancer activities. The first step of the pathway is performed by the sesterterpene synthase oblA that possesses both prenyl transferase and terpene cyclase activity, converting isopentenyl diphosphate and dimethylallyl diphosphate into geranylfarnesyl diphosphate (GFPP) and further converting GFPP into ophiobolin F, respectively. Other sesterterpenoids (C(25) terpenoids) are found as minor products of oblA. The cytochrome P450 monooxygenase oblB then catalyzes a four-step oxidative transformation of ophiobolin F to yield ophiobolin C. The function of the cytochrome P450 monooxygenase oblE has still to be determined. This chain is Cytochrome P450 monooxygenase oblB, found in Emericella variicolor (Aspergillus stellatus).